The chain runs to 419 residues: Glycine, glutamate and proline-rich protein (419 aa).

A signal peptide spans 1–16 (MKCLVALFLSLSLVAC). The interval 74–152 (VERESEEAEG…VDMCAGESRR (79 aa)) is disordered. Positions 76–85 (RESEEAEGEG) are enriched in acidic residues. The segment covering 86–130 (TDGRGGGEGEREGWGGEREGGEGEREGGEGEREGREGEREGKSSE) has biased composition (basic and acidic residues).

This sequence in the C-terminal section; belongs to the glycosyl hydrolase 23 family. Component of the acid-insoluble organic matrix of calcified layers of the shell (at protein level).

It localises to the secreted. The protein is Glycine, glutamate and proline-rich protein of Lottia gigantea (Giant owl limpet).